We begin with the raw amino-acid sequence, 615 residues long: Proteasome-associated ATPase (615 aa).

Positions 1 to 27 (MSESERSEASEVFGTSPDSRLSSEDAA) are disordered. Residues 22–99 (SSEDAAELEQ…LREEVDRLGQ (78 aa)) are a coiled coil. 302–307 (GCGKTL) contacts ATP. Residues 614–615 (YL) are docks into pockets in the proteasome alpha-ring.

It belongs to the AAA ATPase family. As to quaternary structure, homohexamer. Assembles into a hexameric ring structure that caps the 20S proteasome core. Strongly interacts with the prokaryotic ubiquitin-like protein Pup through a hydrophobic interface; the interacting region of ARC lies in its N-terminal coiled-coil domain. There is one Pup binding site per ARC hexamer ring. Upon ATP-binding, the C-terminus of ARC interacts with the alpha-rings of the proteasome core, possibly by binding to the intersubunit pockets.

It functions in the pathway protein degradation; proteasomal Pup-dependent pathway. In terms of biological role, ATPase which is responsible for recognizing, binding, unfolding and translocation of pupylated proteins into the bacterial 20S proteasome core particle. May be essential for opening the gate of the 20S proteasome via an interaction with its C-terminus, thereby allowing substrate entry and access to the site of proteolysis. Thus, the C-termini of the proteasomal ATPase may function like a 'key in a lock' to induce gate opening and therefore regulate proteolysis. This chain is Proteasome-associated ATPase, found in Mycolicibacterium vanbaalenii (strain DSM 7251 / JCM 13017 / BCRC 16820 / KCTC 9966 / NRRL B-24157 / PYR-1) (Mycobacterium vanbaalenii).